Consider the following 143-residue polypeptide: Large ribosomal subunit protein uL15 (143 aa).

The interval M1 to R59 is disordered. Positions R21–A31 are enriched in gly residues.

The protein belongs to the universal ribosomal protein uL15 family. Part of the 50S ribosomal subunit.

In terms of biological role, binds to the 23S rRNA. The sequence is that of Large ribosomal subunit protein uL15 from Albidiferax ferrireducens (strain ATCC BAA-621 / DSM 15236 / T118) (Rhodoferax ferrireducens).